Here is a 98-residue protein sequence, read N- to C-terminus: NADH-ubiquinone oxidoreductase chain 4L (98 aa).

A run of 3 helical transmembrane segments spans residues M1–M21, S29–L49, and L61–I81.

Belongs to the complex I subunit 4L family. Core subunit of respiratory chain NADH dehydrogenase (Complex I) which is composed of 45 different subunits.

The protein resides in the mitochondrion inner membrane. The enzyme catalyses a ubiquinone + NADH + 5 H(+)(in) = a ubiquinol + NAD(+) + 4 H(+)(out). Its function is as follows. Core subunit of the mitochondrial membrane respiratory chain NADH dehydrogenase (Complex I) which catalyzes electron transfer from NADH through the respiratory chain, using ubiquinone as an electron acceptor. Part of the enzyme membrane arm which is embedded in the lipid bilayer and involved in proton translocation. The protein is NADH-ubiquinone oxidoreductase chain 4L (MT-ND4L) of Mammuthus primigenius (Siberian woolly mammoth).